The sequence spans 238 residues: Probable succinyl-CoA:3-ketoacid coenzyme A transferase subunit A (238 aa).

24–30 is a CoA binding site; it reads GGFGLCG.

This sequence belongs to the 3-oxoacid CoA-transferase subunit A family. Heterodimer of a subunit A and a subunit B.

It catalyses the reaction a 3-oxo acid + succinyl-CoA = a 3-oxoacyl-CoA + succinate. This Bacillus subtilis (strain 168) protein is Probable succinyl-CoA:3-ketoacid coenzyme A transferase subunit A (scoA).